A 420-amino-acid polypeptide reads, in one-letter code: Trophoblast glycoprotein (420 aa).

The N-terminal stretch at 1–34 is a signal peptide; sequence MPGGCSRGPAAGDGRLRLARLALVLLGWVSSSSS. At 35–355 the chain is on the extracellular side; the sequence is TSSASSSSSS…PILPPSLQTS (321 aa). The 39-residue stretch at 53–91 folds into the LRRNT domain; sequence SAQPPLPDQCPALCECSEAARTVKCVNRNLTEVPTDLPL. 2 cysteine pairs are disulfide-bonded: C62–C68 and C66–C77. N81 carries an N-linked (GlcNAc...) asparagine glycan. LRR repeat units lie at residues 92–113, 116–139, 141–163, 172–204, 209–232, 233–255, and 256–275; these read YVRNLFLTGNQLAVLPAGAFAR, PLAELAALNLSGSRLDEVRGGAFE, LPSLRQLDLSHNPLAYLSPFAFS, PSPLVELILNHIVPPDDKRQNRSFEGMVAAALV, LQGLHLLELASNHFLYLPRDVLAQ, LPSLRYLDLSNNSLVSLTYVSFR, and NLTHLESLHLEDNALKVLHN. N124 is a glycosylation site (N-linked (GlcNAc...) asparagine). N-linked (GlcNAc...) asparagine glycosylation is present at N275. The LRRCT domain occupies 283–346; the sequence is GLPHVRVFLD…LNSADLDCDP (64 aa). Intrachain disulfides connect C298–C323 and C300–C344. Residues 356 to 376 traverse the membrane as a helical segment; it reads YVFLGIVLALIGAIFLLVLYL. The Cytoplasmic portion of the chain corresponds to 377-420; the sequence is NRKGIKKWMHNIRDACRDHMEGYHYRYEINADPRLTNLSSNSDV. S418 is subject to Phosphoserine.

Highly glycosylated.

It is found in the cell membrane. In terms of biological role, may function as an inhibitor of Wnt/beta-catenin signaling by indirectly interacting with LRP6 and blocking Wnt3a-dependent LRP6 internalization. This Macaca fascicularis (Crab-eating macaque) protein is Trophoblast glycoprotein (TPBG).